The primary structure comprises 334 residues: Ribosomal RNA small subunit methyltransferase H (334 aa).

S-adenosyl-L-methionine is bound by residues 39-41 (GGH), aspartate 59, phenylalanine 83, aspartate 100, and glutamine 107. Positions 303–334 (ERTQAHGAERSDMRRAERPDARRAEHGEVLPP) are disordered.

Belongs to the methyltransferase superfamily. RsmH family.

It is found in the cytoplasm. The enzyme catalyses cytidine(1402) in 16S rRNA + S-adenosyl-L-methionine = N(4)-methylcytidine(1402) in 16S rRNA + S-adenosyl-L-homocysteine + H(+). In terms of biological role, specifically methylates the N4 position of cytidine in position 1402 (C1402) of 16S rRNA. The polypeptide is Ribosomal RNA small subunit methyltransferase H (Verminephrobacter eiseniae (strain EF01-2)).